The sequence spans 264 residues: Undecaprenyl-diphosphatase (264 aa).

6 helical membrane passes run Asn-41–Trp-61, Tyr-82–Asp-102, Ala-106–Leu-126, Ile-140–Leu-160, Ile-213–Cys-233, and Lys-244–Leu-264.

It belongs to the UppP family.

The protein resides in the cell inner membrane. The enzyme catalyses di-trans,octa-cis-undecaprenyl diphosphate + H2O = di-trans,octa-cis-undecaprenyl phosphate + phosphate + H(+). Catalyzes the dephosphorylation of undecaprenyl diphosphate (UPP). Confers resistance to bacitracin. The protein is Undecaprenyl-diphosphatase of Bacteroides thetaiotaomicron (strain ATCC 29148 / DSM 2079 / JCM 5827 / CCUG 10774 / NCTC 10582 / VPI-5482 / E50).